A 310-amino-acid chain; its full sequence is Acetylglutamate kinase (310 aa).

Residues 83-84, Arg105, and Asn207 contribute to the substrate site; that span reads GG.

It belongs to the acetylglutamate kinase family. ArgB subfamily.

The protein resides in the cytoplasm. The catalysed reaction is N-acetyl-L-glutamate + ATP = N-acetyl-L-glutamyl 5-phosphate + ADP. The protein operates within amino-acid biosynthesis; L-arginine biosynthesis; N(2)-acetyl-L-ornithine from L-glutamate: step 2/4. In terms of biological role, catalyzes the ATP-dependent phosphorylation of N-acetyl-L-glutamate. The polypeptide is Acetylglutamate kinase (Ralstonia nicotianae (strain ATCC BAA-1114 / GMI1000) (Ralstonia solanacearum)).